We begin with the raw amino-acid sequence, 468 residues long: Neuronal acetylcholine receptor subunit alpha-5 (468 aa).

Residues 1 to 22 (MATRGSGPRAPRLLLLVQLVAG) form the signal peptide. Residues 23–254 (RCGLAGAAGG…VIKRLPLFYT (232 aa)) lie on the Extracellular side of the membrane. Residues Asn-155, Asn-183, and Asn-229 are each glycosylated (N-linked (GlcNAc...) asparagine). Cysteines 170 and 184 form a disulfide. Cys-234 and Cys-235 are disulfide-bonded. The next 3 membrane-spanning stretches (helical) occupy residues 255 to 275 (LFLI…FYLP), 282 to 302 (ICLC…IEEI), and 317 to 337 (LVFT…AINI). Residues 338–429 (HHRSSSTHNA…WKFIAQVLDR (92 aa)) are Cytoplasmic-facing. Residues 430-451 (MFLWTFLFVSIVGSLGLFVPVI) form a helical membrane-spanning segment. Over 452 to 468 (YKWANILIPVHIGNANK) the chain is Extracellular.

Belongs to the ligand-gated ion channel (TC 1.A.9) family. Acetylcholine receptor (TC 1.A.9.1) subfamily. Alpha-5/CHRNA5 sub-subfamily. Neuronal AChR that forms heteropentamers composed of two different type of subunits: alpha and non-alpha (beta). CHRNA5/alpha-5 subunit is only able to form functional nAChRs when co-assembled with another alpha subunit, can be combined to CHRNA4/alpha-4 or CHRNA3/alpha-3 and CHRNB4/beta-4 or CHRNB2/beta-2 to give rise to functional receptors. Interacts with LYPD6.

It localises to the synaptic cell membrane. It is found in the cell membrane. The catalysed reaction is Ca(2+)(in) = Ca(2+)(out). It carries out the reaction K(+)(in) = K(+)(out). It catalyses the reaction Na(+)(in) = Na(+)(out). Activated by a myriad of ligands such as acetylcholine, cytisine, nicotine, choline and epibatidine. In terms of biological role, component of neuronal acetylcholine receptors (nAChRs) that function as pentameric, ligand-gated cation channels with high calcium permeability among other activities. nAChRs are excitatory neurotrasnmitter receptors formed by a collection of nAChR subunits known to mediate synaptic transmission in the nervous system and the neuromuscular junction. Each nAchR subunit confers differential attributes to channel properties, including activation, deactivation and desensitization kinetics, pH sensitivity, cation permeability, and binding to allosteric modulators. Has an accessory rather than functional role and is only able to form functional nAChRs when co-assembled with another beta subunit. Participates in pentameric assemblies along with CHRNA3, CHRNA4, CHRNB2 and CHRNB4. Increases receptor sensitivity to acetylcholine and nicotine when associated with CHRNA4 and CHRNB2. Plays a role in nicotine addiction. This Pan troglodytes (Chimpanzee) protein is Neuronal acetylcholine receptor subunit alpha-5 (CHRNA5).